Reading from the N-terminus, the 358-residue chain is UDP-3-O-acylglucosamine N-acyltransferase (358 aa).

The active-site Proton acceptor is histidine 248.

This sequence belongs to the transferase hexapeptide repeat family. LpxD subfamily. In terms of assembly, homotrimer.

It catalyses the reaction a UDP-3-O-[(3R)-3-hydroxyacyl]-alpha-D-glucosamine + a (3R)-hydroxyacyl-[ACP] = a UDP-2-N,3-O-bis[(3R)-3-hydroxyacyl]-alpha-D-glucosamine + holo-[ACP] + H(+). The protein operates within bacterial outer membrane biogenesis; LPS lipid A biosynthesis. In terms of biological role, catalyzes the N-acylation of UDP-3-O-acylglucosamine using 3-hydroxyacyl-ACP as the acyl donor. Is involved in the biosynthesis of lipid A, a phosphorylated glycolipid that anchors the lipopolysaccharide to the outer membrane of the cell. This chain is UDP-3-O-acylglucosamine N-acyltransferase, found in Synechococcus sp. (strain WH7803).